The chain runs to 659 residues: Interferon-induced GTP-binding protein Mx2 (659 aa).

The region spanning Asp65–Pro338 is the Dynamin-type G domain. The tract at residues Gly75–Ser82 is G1 motif. GTP is bound at residue Gly75–Ser82. Positions Val100–Arg102 are G2 motif. The G3 motif stretch occupies residues Asp176–Gly179. GTP-binding positions include Asp176–Ile180 and Thr245–Asp248. The tract at residues Thr245–Asp248 is G4 motif. Residues Lys277 to Gly280 form a G5 motif region. Residues Glu547–Gln567 are disordered. In terms of domain architecture, GED spans Met571–Gly659.

It belongs to the TRAFAC class dynamin-like GTPase superfamily. Dynamin/Fzo/YdjA family.

It localises to the cytoplasm. Interferon-induced dynamin-like GTPase with antiviral activity against vesicular stomatitis virus (VSV). The sequence is that of Interferon-induced GTP-binding protein Mx2 (Mx2) from Rattus norvegicus (Rat).